A 213-amino-acid polypeptide reads, in one-letter code: Virion protein US10 homolog (213 aa).

This sequence belongs to the herpesviridae US10 family. Post-translationally, phosphorylated.

The protein resides in the virion tegument. The protein localises to the host nucleus matrix. The chain is Virion protein US10 homolog (US639) from Gallid herpesvirus 2 (strain GA) (GaHV-2).